A 157-amino-acid chain; its full sequence is Endoribonuclease YbeY (157 aa).

Positions 114, 118, and 124 each coordinate Zn(2+).

The protein belongs to the endoribonuclease YbeY family. Requires Zn(2+) as cofactor.

The protein localises to the cytoplasm. Functionally, single strand-specific metallo-endoribonuclease involved in late-stage 70S ribosome quality control and in maturation of the 3' terminus of the 16S rRNA. The chain is Endoribonuclease YbeY from Yersinia enterocolitica serotype O:8 / biotype 1B (strain NCTC 13174 / 8081).